The chain runs to 375 residues: Chaperone protein DnaJ (375 aa).

A J domain is found at 5-70; it reads DYYEVLGVAR…NKRRAYDAHG (66 aa). The segment at 131 to 208 adopts a CR-type zinc-finger fold; it reads GIERRIEIPT…CHGAGRVEED (78 aa). Residues Cys144, Cys147, Cys160, Cys163, Cys182, Cys185, Cys196, and Cys199 each coordinate Zn(2+). CXXCXGXG motif repeat units follow at residues 144-151, 160-167, 182-189, and 196-203; these read CAPCHGSG, CGTCHGRG, CPHCDGRG, and CKTCHGAG.

This sequence belongs to the DnaJ family. In terms of assembly, homodimer. It depends on Zn(2+) as a cofactor.

It is found in the cytoplasm. In terms of biological role, participates actively in the response to hyperosmotic and heat shock by preventing the aggregation of stress-denatured proteins and by disaggregating proteins, also in an autonomous, DnaK-independent fashion. Unfolded proteins bind initially to DnaJ; upon interaction with the DnaJ-bound protein, DnaK hydrolyzes its bound ATP, resulting in the formation of a stable complex. GrpE releases ADP from DnaK; ATP binding to DnaK triggers the release of the substrate protein, thus completing the reaction cycle. Several rounds of ATP-dependent interactions between DnaJ, DnaK and GrpE are required for fully efficient folding. Also involved, together with DnaK and GrpE, in the DNA replication of plasmids through activation of initiation proteins. This Xanthomonas euvesicatoria pv. vesicatoria (strain 85-10) (Xanthomonas campestris pv. vesicatoria) protein is Chaperone protein DnaJ.